Here is an 805-residue protein sequence, read N- to C-terminus: MSFNHREIEKKWQDYWEQHKTFRTPDESDKPKFYVLDMFPYPSGAGLHVGHPEGYTATDILARMKRMQGYNVLHPMGWDAFGLPAEQYALDTGNDPAEFTQKNIDNFRRQIKSLGFSYDWDREINTTDPNYYKWTQWIFLKLYEKGLAYMDEVPVNWCPALGTVLANEEVINGRSERGGHPVIRKPMRQWMLKITAYADRLLEDLEELDWPESIKEMQRNWIGRSEGAEIEFAVDGHDESFTVFTTRPDTLFGATYAVLAPEHPLVEKITTPEQKPAVDAYLKEVQSKSDLERTDLAKEKTGVFTGAYAIHPVTGDKLPIWIADYVLMGYGTGAIMAVPAHDERDYEFAKTFNLPIKEVVAGGNVENEPYTGDGEHINSEFLNGLNKQEAIEKMIAWLEENGKGQKKVSYRLRDWLFSRQRYWGEPIPVIHWEDGTMTTVPEEELPLVLPKTDEIKPSGTGESPLANIEEWVNVVDPKTGKKGRRETNTMPQWAGSCWYYLRYIDPHNDKQLADPEKLKQWLPVDVYIGGAEHAVLHLLYARFWHKVLYDLGIVPTKEPFQKLFNQGMILGENNEKMSKSKGNVVNPDDIVESHGADTLRLYEMFMGPLEASIAWSTKGLDGARRFLERVWRLFVTEDGQLNPNIVDEPANDTLERVYHQTVKKVTEDYEALRFNTAISQLMVFINEAYKAEQMKKEYMEGFVKLLSPVCPHIGEELWQKLGHTDTIAYEPWPTYDEAKLVEDVVEIVIQINGKVRAKLNVPADLSKEALEERALADEKIKEQLAGKTVRKVITVPGKLVNIVAN.

Residues 40–51 (PYPSGAGLHVGH) carry the 'HIGH' region motif. The short motif at 576 to 580 (KMSKS) is the 'KMSKS' region element. Residue K579 participates in ATP binding.

This sequence belongs to the class-I aminoacyl-tRNA synthetase family.

It is found in the cytoplasm. The enzyme catalyses tRNA(Leu) + L-leucine + ATP = L-leucyl-tRNA(Leu) + AMP + diphosphate. The protein is Leucine--tRNA ligase of Geobacillus thermodenitrificans (strain NG80-2).